We begin with the raw amino-acid sequence, 140 residues long: Ubiquitin-like protein ATG12 (140 aa).

The disordered stretch occupies residues 1–52; the sequence is MAEEPQTVLQLPPSSAAGGEGLTDVSPETTTPEPPSSAAVSPGTEEPAGDTK. Low complexity predominate over residues 25-42; the sequence is VSPETTTPEPPSSAAVSP. A Glycyl lysine isopeptide (Gly-Lys) (interchain with K-? in acceptor protein) cross-link involves residue glycine 140.

Belongs to the ATG12 family. As to quaternary structure, forms a conjugate with ATG5. Part of the minor complex composed of 4 sets of ATG12-ATG5 and ATG16L1 (400 kDa); this complex interacts with ATG3 leading to disruption of ATG7 interaction and promotion of ATG8-like proteins lipidation. Forms an 800-kDa complex composed of ATG12-ATG5 and ATG16L2. Interacts with DHX58/RIG-1, IFIH1/MDA5 and MAVS/IPS-1 in monomeric form as well as in ATG12-ATG5 conjugate. The interaction with MAVS is further enhanced upon vesicular stomatitis virus (VSV) infection. Interacts with ATG3; this interaction is essential for phosphatidylethanolamine (PE)-conjugated ATG8-like proteins formation. Interacts with ATG7. Interacts with ATG10. Interacts with TECPR1. Interacts with SH3BGRL. The ATG12-ATG5 conjugate interacts with PDCD6IP (via the BRO1 domain); this interaction is bridged by ATG12 and promotes multiple PDCD6IP-mediated functions such as endolysosomal trafficking, macroautophagy and exosome biogenesis. Post-translationally, acetylated by EP300.

The protein localises to the cytoplasm. The protein resides in the preautophagosomal structure membrane. In terms of biological role, ubiquitin-like protein involved in autophagy vesicles formation. Conjugation with ATG5 through a ubiquitin-like conjugating system involving also ATG7 as an E1-like activating enzyme and ATG10 as an E2-like conjugating enzyme, is essential for its function. The ATG12-ATG5 conjugate acts as an E3-like enzyme which is required for lipidation of ATG8 family proteins and their association to the vesicle membranes. The ATG12-ATG5 conjugate also negatively regulates the innate antiviral immune response by blocking the type I IFN production pathway through direct association with RARRES3 and MAVS. Also plays a role in translation or delivery of incoming viral RNA to the translation apparatus. As part of the ATG8 conjugation system with ATG5 and ATG16L1, required for recruitment of LRRK2 to stressed lysosomes and induction of LRRK2 kinase activity in response to lysosomal stress. The protein is Ubiquitin-like protein ATG12 of Pongo abelii (Sumatran orangutan).